Reading from the N-terminus, the 239-residue chain is Fatty acid metabolism regulator protein (239 aa).

The HTH gntR-type domain maps to 6–74 (QSPAGFAEEY…HGKPTKVNNF (69 aa)). Residues 34–53 (ERELSELIGVTRTTLREVLQ) constitute a DNA-binding region (H-T-H motif).

As to quaternary structure, homodimer.

It localises to the cytoplasm. Its function is as follows. Multifunctional regulator of fatty acid metabolism. This Proteus mirabilis (strain HI4320) protein is Fatty acid metabolism regulator protein.